Consider the following 509-residue polypeptide: Maturase K (509 aa).

It belongs to the intron maturase 2 family. MatK subfamily.

Its subcellular location is the plastid. It is found in the chloroplast. Its function is as follows. Usually encoded in the trnK tRNA gene intron. Probably assists in splicing its own and other chloroplast group II introns. This Austrocylindropuntia vestita (Cactus) protein is Maturase K.